Here is a 421-residue protein sequence, read N- to C-terminus: Outer capsid protein P8 (421 aa).

The protein belongs to the phytoreovirus outer capsid protein P8 family. As to quaternary structure, homotrimer. Homomultimer. Interacts with host peroxisomal glycolate oxidase (GOX). This interaction mediates its relocation to virus factories peripheral to host peroxisomes.

Its subcellular location is the virion. The protein localises to the host cytoplasm. In terms of biological role, capsid protein which self-assembles to form the outer icosahedral capsid with a T=13 symmetry, about 70 nm in diameter and consisting of 780 molecules capsid proteins. The sequence is that of Outer capsid protein P8 from Alopecurus aequalis (Barnyard grass).